A 453-amino-acid polypeptide reads, in one-letter code: Na(+)/H(+) antiporter NhaA (453 aa).

11 consecutive transmembrane segments (helical) span residues 28–48, 79–99, 115–135, 144–164, 173–193, 196–216, 241–261, 321–341, 355–375, 393–413, and 424–444; these read FLHI…AALI, LHFL…GMEI, ALPL…YFIL, GWAV…ALLG, VFLL…IAVF, GGMD…VLGM, TGAH…VFAP, VAFG…LDGI, VLIA…FLMV, LVGL…TLAF, and LGIL…GFFQ.

It belongs to the NhaA Na(+)/H(+) (TC 2.A.33) antiporter family.

It is found in the cell inner membrane. It carries out the reaction Na(+)(in) + 2 H(+)(out) = Na(+)(out) + 2 H(+)(in). In terms of biological role, na(+)/H(+) antiporter that extrudes sodium in exchange for external protons. This chain is Na(+)/H(+) antiporter NhaA, found in Janthinobacterium sp. (strain Marseille) (Minibacterium massiliensis).